The sequence spans 247 residues: Ras-like protein family member 11B (247 aa).

Residues 28 to 245 form a small GTPase-like region; it reads AGRRLVKIAV…ALSAKVRTVT (218 aa). GTP-binding positions include 39 to 46, 86 to 93, and 151 to 154; these read GASGVGKT, DTPGIQVH, and NKAD. The tract at residues 202–228 is disordered; the sequence is PKQQPSSTPEKRRTSLIPRPKSPNMQD.

This sequence belongs to the small GTPase superfamily. Ras family.

The catalysed reaction is GTP + H2O = GDP + phosphate + H(+). In Mus musculus (Mouse), this protein is Ras-like protein family member 11B.